The following is a 443-amino-acid chain: Protein king tubby (443 aa).

Disordered stretches follow at residues Thr-57 to Arg-80 and His-98 to Val-191. Residues Val-67 to Arg-80 show a composition bias toward polar residues. Residues Gln-113 to Gln-128 are compositionally biased toward low complexity. Residue Ser-136 is modified to Phosphoserine. The segment covering Asn-177–Glu-186 has biased composition (gly residues).

This sequence belongs to the TUB family.

It is found in the cytoplasm. Its subcellular location is the nucleus. It localises to the cell projection. The protein localises to the cilium membrane. The protein resides in the rhabdomere. The protein is Protein king tubby of Drosophila sechellia (Fruit fly).